The chain runs to 171 residues: Early E1A protein (171 aa).

The interval 40 to 48 is interaction with RB1 in competition with E2F1; sequence PTLHDLFDV. The interval 67–96 is disordered; the sequence is DTDSSASTEGDSGFSPLSTPPVSPIPPHPT. A compositionally biased stretch (pro residues) spans 84 to 96; sequence STPPVSPIPPHPT. Positions 106-110 match the LXCXE motif, interaction with host RB1 motif; sequence LLCLE. The segment at 145–163 is a zinc-finger region; that stretch reads CLRCAFYQEQDDNALCGLC. The Nuclear localization signal motif lies at 166–171; the sequence is KGPCRR.

Belongs to the adenoviridae E1A protein family. In terms of assembly, interacts with host UBE2I; this interaction interferes with polySUMOylation. Interacts with host RB1; this interaction induces the aberrant dissociation of RB1-E2F1 complex thereby disrupting the activity of RB1 and activating E2F1-regulated genes. Interacts with host ATF7; the interaction enhances ATF7-mediated viral transactivation activity which requires the zinc binding domains of both proteins. Isoform early E1A 32 kDa protein and isoform early E1A 26 kDa protein interact (via N-terminus) with CUL1 and E3 ubiquitin ligase RBX1; these interactions inhibit RBX1-CUL1-dependent elongation reaction of ubiquitin chains and attenuate ubiquitination of SCF(FBXW7) target proteins. Interacts (via PXLXP motif) with host ZMYND11/BS69 (via MYND-type zinc finger); this interaction inhibits E1A mediated transactivation. Interacts with host EP300; this interaction stimulates the acetylation of RB1 by recruiting EP300 and RB1 into a multimeric-protein complex. Interacts with host CTBP1 and CTBP2; this interaction seems to potentiate viral replication. Interacts with host DCAF7. Interacts with host DYRK1A. Interacts with host KPNA4; this interaction allows E1A import into the host nucleus. Interacts with host EP400; this interaction stabilizes MYC. Interacts with host TBP protein; this interaction probably disrupts the TBP-TATA complex.

The protein resides in the host nucleus. In terms of biological role, plays a role in viral genome replication by driving entry of quiescent cells into the cell cycle. Stimulation of progression from G1 to S phase allows the virus to efficiently use the cellular DNA replicating machinery to achieve viral genome replication. E1A protein has both transforming and trans-activating activities. Induces the disassembly of the E2F1 transcription factor from RB1 by direct competition for the same binding site on RB1, with subsequent transcriptional activation of E2F1-regulated S-phase genes and of the E2 region of the adenoviral genome. Release of E2F1 leads to the ARF-mediated inhibition of MDM2 and causes TP53/p53 to accumulate because it is not targeted for degradation by MDM2-mediated ubiquitination anymore. This increase in TP53, in turn, would arrest the cell proliferation and direct its death but this effect is counteracted by the viral protein E1B-55K. Inactivation of the ability of RB1 to arrest the cell cycle is critical for cellular transformation, uncontrolled cellular growth and proliferation induced by viral infection. Interaction with RBX1 and CUL1 inhibits ubiquitination of the proteins targeted by SCF(FBXW7) ubiquitin ligase complex, and may be linked to unregulated host cell proliferation. The tumorigenesis-restraining activity of E1A may be related to the disruption of the host CtBP-CtIP complex through the CtBP binding motif. The sequence is that of Early E1A protein from Canis lupus familiaris (Dog).